The chain runs to 416 residues: D-amino acid dehydrogenase (416 aa).

3–17 lines the FAD pocket; sequence ITILGSGVIGVTTAY.

This sequence belongs to the DadA oxidoreductase family. The cofactor is FAD.

It catalyses the reaction a D-alpha-amino acid + A + H2O = a 2-oxocarboxylate + AH2 + NH4(+). The protein operates within amino-acid degradation; D-alanine degradation; NH(3) and pyruvate from D-alanine: step 1/1. In terms of biological role, oxidative deamination of D-amino acids. This chain is D-amino acid dehydrogenase, found in Brucella abortus (strain S19).